A 155-amino-acid chain; its full sequence is Microsomal glutathione S-transferase 1 (155 aa).

Residues 3-9 (DLTELMK) are Lumenal-facing. Residues 10-33 (NEVFMAFASYATIVLSKMMFMSTA) traverse the membrane as a helical segment. At 34-62 (TAFYRLTRKVFANPEDCSSFGKGENAKKY) the chain is on the cytoplasmic side. Arg38 contacts glutathione. Residues Lys42, Lys55, and Lys60 each carry the N6-acetyllysine modification. A helical transmembrane segment spans residues 63-96 (LRTDERVERVRRAHLNDLENIVPFLGIGLLYSLS). The glutathione site is built by Arg73, Arg74, His76, and Glu81. Residues 97–99 (GPD) are Lumenal-facing. Residues 100–123 (LSTAILHFRLFVGARIYHTIAYLT) traverse the membrane as a helical segment. Tyr121 contacts glutathione. Topologically, residues 124-128 (PLPQP) are cytoplasmic. Residues 129-148 (NRGLAFFLGYGVTLSMAYRL) traverse the membrane as a helical segment. Residues 149–155 (LKSRLYL) lie on the Lumenal side of the membrane.

The protein belongs to the MAPEG family. As to quaternary structure, homotrimer; The trimer binds only one molecule of glutathione.

Its subcellular location is the endoplasmic reticulum membrane. It is found in the mitochondrion outer membrane. The catalysed reaction is RX + glutathione = an S-substituted glutathione + a halide anion + H(+). Its function is as follows. Conjugation of reduced glutathione to a wide number of exogenous and endogenous hydrophobic electrophiles. This Sus scrofa (Pig) protein is Microsomal glutathione S-transferase 1 (MGST1).